Consider the following 183-residue polypeptide: Deoxyuridine 5'-triphosphate nucleotidohydrolase (183 aa).

Substrate-binding positions include 67–69 (RSG), asparagine 80, 84–86 (TID), and lysine 94. Residues 138–183 (RAEGGFGSTGGHAGLDPASGTSGQVAEGGPTGGNRYASVVSDREGQ) are disordered. The segment covering 141 to 150 (GGFGSTGGHA) has biased composition (gly residues).

Belongs to the dUTPase family. It depends on Mg(2+) as a cofactor.

The catalysed reaction is dUTP + H2O = dUMP + diphosphate + H(+). It participates in pyrimidine metabolism; dUMP biosynthesis; dUMP from dCTP (dUTP route): step 2/2. Functionally, this enzyme is involved in nucleotide metabolism: it produces dUMP, the immediate precursor of thymidine nucleotides and it decreases the intracellular concentration of dUTP so that uracil cannot be incorporated into DNA. The sequence is that of Deoxyuridine 5'-triphosphate nucleotidohydrolase from Streptomyces coelicolor (strain ATCC BAA-471 / A3(2) / M145).